The chain runs to 443 residues: Exodeoxyribonuclease 7 large subunit (443 aa).

The protein belongs to the XseA family. Heterooligomer composed of large and small subunits.

It localises to the cytoplasm. It catalyses the reaction Exonucleolytic cleavage in either 5'- to 3'- or 3'- to 5'-direction to yield nucleoside 5'-phosphates.. Bidirectionally degrades single-stranded DNA into large acid-insoluble oligonucleotides, which are then degraded further into small acid-soluble oligonucleotides. The chain is Exodeoxyribonuclease 7 large subunit from Legionella pneumophila (strain Lens).